The primary structure comprises 247 residues: tRNA (guanine-N(7)-)-methyltransferase (247 aa).

Residues Gly-70, 93 to 94 (EI), 128 to 129 (NA), and Leu-148 contribute to the S-adenosyl-L-methionine site. Asp-151 is an active-site residue. Residue 226–228 (SEE) participates in S-adenosyl-L-methionine binding.

The protein belongs to the class I-like SAM-binding methyltransferase superfamily. TrmB family.

The protein localises to the nucleus. The enzyme catalyses guanosine(46) in tRNA + S-adenosyl-L-methionine = N(7)-methylguanosine(46) in tRNA + S-adenosyl-L-homocysteine. The protein operates within tRNA modification; N(7)-methylguanine-tRNA biosynthesis. In terms of biological role, catalyzes the formation of N(7)-methylguanine at position 46 (m7G46) in tRNA. This is tRNA (guanine-N(7)-)-methyltransferase from Drosophila pseudoobscura pseudoobscura (Fruit fly).